The following is a 331-amino-acid chain: DNA double-strand break repair nuclease NurA (331 aa).

Mn(2+)-binding residues include aspartate 56 and aspartate 131.

The protein belongs to the NurA family. Homodimer. Interacts with SSB. Mn(2+) serves as cofactor.

With respect to regulation, the 5'-3' ssDNA and dsDNA exonuclease and ssDNA endonuclease activities are inhibited by SSB (single-stranded DNA-binding protein). Its function is as follows. Involved in DNA double-strand break (DSB) repair. Probably acts with HerA to stimulate resection of the 5' strand and produce the long 3' single-strand that is required for RadA loading. Exhibits both single-stranded endonuclease activity and 5'-3' exonuclease activity on single-stranded and double-stranded DNA. This chain is DNA double-strand break repair nuclease NurA, found in Sulfurisphaera tokodaii (strain DSM 16993 / JCM 10545 / NBRC 100140 / 7) (Sulfolobus tokodaii).